A 63-amino-acid polypeptide reads, in one-letter code: Large ribosomal subunit protein bL28 (63 aa).

Belongs to the bacterial ribosomal protein bL28 family.

This Desulfatibacillum aliphaticivorans protein is Large ribosomal subunit protein bL28.